The primary structure comprises 109 residues: Lipoprotein BsmA (109 aa).

Residues Met1 to Ala24 form the signal peptide. Cys25 is lipidated: N-palmitoyl cysteine. Cys25 carries the S-diacylglycerol cysteine lipid modification.

Belongs to the BhsA/McbA family.

It is found in the cell membrane. In terms of biological role, involved in protection of biofilms against oxidative stress. In Escherichia coli (strain K12), this protein is Lipoprotein BsmA (bsmA).